The chain runs to 541 residues: 2-succinyl-5-enolpyruvyl-6-hydroxy-3-cyclohexene-1-carboxylate synthase (541 aa).

This sequence belongs to the TPP enzyme family. MenD subfamily. In terms of assembly, homodimer. Mg(2+) is required as a cofactor. Mn(2+) serves as cofactor. The cofactor is thiamine diphosphate.

It carries out the reaction isochorismate + 2-oxoglutarate + H(+) = 5-enolpyruvoyl-6-hydroxy-2-succinyl-cyclohex-3-ene-1-carboxylate + CO2. It functions in the pathway quinol/quinone metabolism; 1,4-dihydroxy-2-naphthoate biosynthesis; 1,4-dihydroxy-2-naphthoate from chorismate: step 2/7. Its pathway is quinol/quinone metabolism; menaquinone biosynthesis. Functionally, catalyzes the thiamine diphosphate-dependent decarboxylation of 2-oxoglutarate and the subsequent addition of the resulting succinic semialdehyde-thiamine pyrophosphate anion to isochorismate to yield 2-succinyl-5-enolpyruvyl-6-hydroxy-3-cyclohexene-1-carboxylate (SEPHCHC). The sequence is that of 2-succinyl-5-enolpyruvyl-6-hydroxy-3-cyclohexene-1-carboxylate synthase from Rhodococcus opacus (strain B4).